We begin with the raw amino-acid sequence, 484 residues long: MTIRHQGQQYRPRMAFLRKIEALVKDMQDPDTGVRVQNQKVKVVSIPHAMTGSDVLQWISQRLWISGLEAQNLGNFIVKYGYIYPLQDPRNLTLKPDSSLYRFQTPYFWPTQQWPAEDVDYAIYLAKRNIKKKGILEEYEKENYNFLNKKINYKWDFVIMQAREQYRAGKERNKVDRCALDCQEKAYWLVHRCPPGANNVLDYGLDRVTNPNEDQKQTVVSVRKEIMYYRQALMRSTVKSSVSLGGIVKYSEQFSSNDAIMSGCLPSNPWITDDTQFWDLNAKLVDIPTKMRVERWAFNFSELIRDPKGRQSFQHFLRKEFSGENLGFWEACEDLKYGDQSKVKEKAEEIYKLFLAPGARRWINIDGKTMDITVKGLKHPHRYVLDAAQTHIYMLMKKDSYARYLKSPIYKEMLAKAIEPQGTTRKSSSLPFMRRHLRSSPSPVILRQLEEEAKAREAATTVDITQVMSKLDRRSQLRKEPPPK.

A DEP domain is found at 30 to 105; it reads PDTGVRVQNQ…PDSSLYRFQT (76 aa). The G protein gamma domain maps to 219-280; it reads VVSVRKEIMY…ITDDTQFWDL (62 aa). One can recognise an RGS domain in the interval 299-414; sequence NFSELIRDPK…LKSPIYKEML (116 aa). The disordered stretch occupies residues 460 to 484; it reads TTVDITQVMSKLDRRSQLRKEPPPK. The span at 470–484 shows a compositional bias: basic and acidic residues; it reads KLDRRSQLRKEPPPK.

Heterodimer with GNB5. Interacts with RGS7BP, leading to regulate the subcellular location of the heterodimer formed with GNB5. Component of the RGS9-1-Gbeta5 complex composed of RGS9 (RGS9-1), Gbeta5 (GNB5) and RGS9BP. Interacts with PDE6G and GNAT1. In terms of processing, phosphorylation is decreased by light exposition. As to expression, photoreceptor outer segments.

Its subcellular location is the membrane. In terms of biological role, inhibits signal transduction by increasing the GTPase activity of G protein alpha subunits thereby driving them into their inactive GDP-bound form. Binds to GNAT1. Involved in phototransduction; key element in the recovery phase of visual transduction. The protein is Regulator of G-protein signaling 9 (RGS9) of Bos taurus (Bovine).